The chain runs to 317 residues: Acetyl-coenzyme A carboxylase carboxyl transferase subunit alpha (317 aa).

In terms of domain architecture, CoA carboxyltransferase C-terminal spans 39 to 293 (RLESRVNDAM…GDVIAKALAD (255 aa)).

It belongs to the AccA family. As to quaternary structure, acetyl-CoA carboxylase is a heterohexamer composed of biotin carboxyl carrier protein (AccB), biotin carboxylase (AccC) and two subunits each of ACCase subunit alpha (AccA) and ACCase subunit beta (AccD).

It localises to the cytoplasm. The enzyme catalyses N(6)-carboxybiotinyl-L-lysyl-[protein] + acetyl-CoA = N(6)-biotinyl-L-lysyl-[protein] + malonyl-CoA. It functions in the pathway lipid metabolism; malonyl-CoA biosynthesis; malonyl-CoA from acetyl-CoA: step 1/1. Functionally, component of the acetyl coenzyme A carboxylase (ACC) complex. First, biotin carboxylase catalyzes the carboxylation of biotin on its carrier protein (BCCP) and then the CO(2) group is transferred by the carboxyltransferase to acetyl-CoA to form malonyl-CoA. The chain is Acetyl-coenzyme A carboxylase carboxyl transferase subunit alpha from Agrobacterium fabrum (strain C58 / ATCC 33970) (Agrobacterium tumefaciens (strain C58)).